Consider the following 251-residue polypeptide: ATP synthase delta chain, chloroplastic (251 aa).

A chloroplast-targeting transit peptide spans M1 to M64.

Belongs to the ATPase delta chain family. In terms of assembly, F-type ATPases have 2 components, CF(1) - the catalytic core - and CF(0) - the membrane proton channel. CF(1) has five subunits: alpha(3), beta(3), gamma(1), delta(1), epsilon(1). CF(0) has three main subunits: a, b and c.

The protein localises to the plastid. The protein resides in the chloroplast thylakoid membrane. In terms of biological role, this protein seems to be part of the stalk that links CF(0) to CF(1). It either transmits conformational changes from CF(0) into CF(1) or is implicated in proton conduction. This is ATP synthase delta chain, chloroplastic (ATPD) from Pisum sativum (Garden pea).